The chain runs to 1642 residues: Cortactin-binding protein 2 (1642 aa).

5 disordered regions span residues 1–27, 203–222, 366–433, 446–471, and 491–611; these read MATD…AEAA, KKKT…RSTE, IGAS…HPGL, GSNA…SPTS, and RFTS…PSID. The stretch at 119-276 forms a coiled coil; it reads RKMQERMSTQ…EQLKRGTDSK (158 aa). Residues 385–394 are compositionally biased toward polar residues; sequence GPSTGSTADL. The segment covering 395 to 407 has biased composition (low complexity); that stretch reads TSSPTPVPSTVSP. Residue Arg-491 is modified to Asymmetric dimethylarginine. Pro residues predominate over residues 497–506; sequence AGAPPRPGAP. Over residues 576 to 586 the composition is skewed to polar residues; the sequence is TVASPPSTLPQ. 6 ANK repeats span residues 702-732, 736-765, 769-798, 802-831, 835-864, and 904-934; these read GRPT…DINY, DGHS…QVNV, NGFT…NINH, GGQT…DRSV, DGWT…PAHG, and EGWT…EPER. Residues 1440 to 1469 form a disordered region; sequence ESGAWRKVSTSPRKKSGRFSSPTWNKPDLS. Ser-1513 bears the Phosphoserine mark. The segment at 1546–1642 is disordered; the sequence is RRFDSSGNNP…NSRDLEPTQK (97 aa). Polar residues-rich tracts occupy residues 1552 to 1563 and 1571 to 1588; these read GNNPVFSATVNN and KEVS…SNSK. Residues 1613-1627 show a composition bias toward low complexity; it reads SQNTKRSSSSSNTRQ.

Interacts with CTTN/cortactin SH3 domain. Interacts with STRN, STRN4/zinedin and MOB4/phocein; this interactions mediate the association with the STRIPAK core complex and may regulate dendritic spine distribution of the STRIPAK complex in hippocampal neurons. Activation of glutamate receptors weakens the interaction with STRN and STRN4.

The protein localises to the cytoplasm. It localises to the cell cortex. Its subcellular location is the cell projection. The protein resides in the dendritic spine. Its function is as follows. Regulates the dendritic spine distribution of CTTN/cortactin in hippocampal neurons, and thus controls dendritic spinogenesis and dendritic spine maintenance. Associates with the striatin-interacting phosphatase and kinase (STRIPAK) core complex to regulate dendritic spine distribution of the STRIPAK complex in hippocampal neurons. The sequence is that of Cortactin-binding protein 2 (CTTNBP2) from Muntiacus reevesi (Reeves' muntjac).